The chain runs to 82 residues: Large ribosomal subunit protein uL23 (82 aa).

Belongs to the universal ribosomal protein uL23 family. Part of the 50S ribosomal subunit. Contacts protein L29.

Its function is as follows. Binds to 23S rRNA. One of the proteins that surrounds the polypeptide exit tunnel on the outside of the ribosome. The protein is Large ribosomal subunit protein uL23 of Sulfolobus acidocaldarius (strain ATCC 33909 / DSM 639 / JCM 8929 / NBRC 15157 / NCIMB 11770).